A 158-amino-acid chain; its full sequence is Ribosome maturation factor RimP (158 aa).

The protein belongs to the RimP family.

It localises to the cytoplasm. Functionally, required for maturation of 30S ribosomal subunits. The polypeptide is Ribosome maturation factor RimP (Lactobacillus helveticus (strain DPC 4571)).